A 511-amino-acid polypeptide reads, in one-letter code: Lysine--tRNA ligase (511 aa).

Mg(2+)-binding residues include Glu421 and Glu428.

The protein belongs to the class-II aminoacyl-tRNA synthetase family. As to quaternary structure, homodimer. Requires Mg(2+) as cofactor.

Its subcellular location is the cytoplasm. It catalyses the reaction tRNA(Lys) + L-lysine + ATP = L-lysyl-tRNA(Lys) + AMP + diphosphate. This Janthinobacterium sp. (strain Marseille) (Minibacterium massiliensis) protein is Lysine--tRNA ligase.